The primary structure comprises 249 residues: MGNIFLQLLAVVALCIAPARSDWLPGTATFYGGADGSGTMGGACGYGNLYDQGYGINNAALSTPLFNDGASCGQCYLIICDYSKAPDWCKLGKAITVTGTNYCPPNYDLPYGGWCNATRPHFDMSQPAWENIGIYNAGIIPILYQQVKCWRYGGVRFTINGFNYFELVLVTNMAGSGSIASMSVKGSCTGWIQMTRNWGANWQCLAGLAGQALSFNVTSTGGQTIVFDDAVPAGWSFGQTFSTYHQFDY.

An N-terminal signal peptide occupies residues 1 to 21; the sequence is MGNIFLQLLAVVALCIAPARS. Positions 41-154 constitute an Expansin-like EG45 domain; it reads GGACGYGNLY…QQVKCWRYGG (114 aa). 2 N-linked (GlcNAc...) asparagine glycosylation sites follow: Asn-116 and Asn-216. Residues 164–243 enclose the Expansin-like CBD domain; that stretch reads YFELVLVTNM…GWSFGQTFST (80 aa).

The protein belongs to the expansin family. Expansin A subfamily.

It is found in the secreted. The protein localises to the cell wall. Its subcellular location is the membrane. Functionally, may cause loosening and extension of plant cell walls by disrupting non-covalent bonding between cellulose microfibrils and matrix glucans. No enzymatic activity has been found. May be required for rapid internodal elongation in deepwater rice during submergence. In Oryza sativa subsp. japonica (Rice), this protein is Expansin-A19 (EXPA19).